The primary structure comprises 274 residues: Undecaprenyl-diphosphatase (274 aa).

Transmembrane regions (helical) follow at residues 1 to 21 (MDWFYAIIYGIVEGITEFLPI), 48 to 68 (VVIQGGAILAVLAYYWRDFAG), 84 to 104 (LGVIVGVIPAVVLGVLFGDVI), 108 to 128 (LFRPSVVAWALIVGGVLMWVI), 143 to 163 (IGLGRAFLIGAAQCLALLWPG), 187 to 207 (FSFYLGIPTLGGAALLDFIKS), 214 to 234 (IGLLNVFLGAAVSFVVAYLAI), and 254 to 274 (VIFGLLILLLVASGRLANGGL).

It belongs to the UppP family.

The protein resides in the cell membrane. The enzyme catalyses di-trans,octa-cis-undecaprenyl diphosphate + H2O = di-trans,octa-cis-undecaprenyl phosphate + phosphate + H(+). In terms of biological role, catalyzes the dephosphorylation of undecaprenyl diphosphate (UPP). Confers resistance to bacitracin. This Deinococcus geothermalis (strain DSM 11300 / CIP 105573 / AG-3a) protein is Undecaprenyl-diphosphatase.